An 868-amino-acid polypeptide reads, in one-letter code: Probable mixed-linked glucan synthase 3 (868 aa).

A disordered region spans residues 36-68; the sequence is ERKAAGGGGGGAKGKHWAAADKGERRAAKECGG. Positions 53–68 are enriched in basic and acidic residues; it reads AAADKGERRAAKECGG. The next 2 membrane-spanning stretches (helical) occupy residues 86-106 and 116-136; these read LLHPYRALIFARLIAVLLFFG and IMWFWTMSVAGDVWFGFSWLL. Residue Asp211 is part of the active site. The substrate site is built by Asp412 and Asp414. Asp573 is an active-site residue. Helical transmembrane passes span 649 to 669, 686 to 706, 717 to 737, 771 to 791, 809 to 829, and 837 to 857; these read IYPVTSLFILLYAISPVMWLI, LLMIILMIHMIGWLEIKWAGI, FFMIGSTSAYPTAVLHMVVNL, MLIPTMVVLVANIGAIGVAIG, IMGLLFNMWVMFLLYPFALAI, and PIILVVLLPIIFVIVALVYVA.

The protein belongs to the glycosyltransferase 2 family. Plant cellulose synthase-like F subfamily.

The protein localises to the golgi apparatus membrane. In terms of biological role, may catalyze both beta-1,3 and beta-1,4 glycosidic linkage on beta-D-glucan. Essential for (1,3;1,4)-beta-D-glucans synthesis in grasses and cereals (Poaceae). The mixed-linked glucans (which are not present in walls of dicotyledons or most other monocotyledonous plants) are particularly important constituents of the walls of the starchy endosperm and aleurone cells of cereal grains such as oats, wheat, rice and barley. They can account for up to 70% by weight of the wall. This Oryza sativa subsp. indica (Rice) protein is Probable mixed-linked glucan synthase 3 (CSLF3).